The chain runs to 2155 residues: Alpha-tectorin (2155 aa).

The N-terminal stretch at Met1–Ala22 is a signal peptide. Asn34, Asn187, Asn215, Asn278, Asn455, Asn506, Asn528, and Asn560 each carry an N-linked (GlcNAc...) asparagine glycan. In terms of domain architecture, NIDO spans Pro98–Lys252. The VWFC domain maps to Cys260–Cys314. Residues Ser320 to Asp500 form the VWFD 1 domain. Disulfide bonds link Cys322–Cys461 and Cys344–Cys499. The 54-residue stretch at Cys597–Cys650 folds into the TIL 1 domain. Asn670, Asn687, Asn813, Asn843, Asn855, Asn898, Asn920, Asn931, and Asn949 each carry an N-linked (GlcNAc...) asparagine glycan. In terms of domain architecture, VWFD 2 spans Thr711–Asn886. Cys713 and Cys849 are oxidised to a cystine. Positions Cys984–Cys1036 constitute a TIL 2 domain. Residues Asn1048, Asn1235, and Asn1364 are each glycosylated (N-linked (GlcNAc...) asparagine). The VWFD 3 domain occupies Ala1098 to Gln1278. 2 disulfide bridges follow: Cys1100/Cys1241 and Cys1122/Cys1277. The TIL 3 domain maps to Cys1372–Cys1425. Residues Ser1485 to Asn1666 enclose the VWFD 4 domain. 7 disulfide bridges follow: Cys1487–Cys1622, Cys1509–Cys1665, Cys1717–Cys1775, Cys1741–Cys1784, Cys1786–Cys1818, Cys1806–Cys1898, and Cys1837–Cys1857. Residues Asn1538, Asn1565, Asn1756, Asn1772, Asn1794, Asn1851, Asn1864, Asn1880, Asn1920, and Asn1939 are each glycosylated (N-linked (GlcNAc...) asparagine). In terms of domain architecture, ZP spans Thr1805 to Asn2059. 3 disulfides stabilise this stretch: Cys1980/Cys2040, Cys2001/Cys2056, and Cys2045/Cys2052. Asn2091 carries the GPI-anchor amidated asparagine lipid modification. A propeptide spans Gly2092 to Ser2155 (removed in mature form).

May form homomeric filament after self-association or heteromeric filament after association with beta-tectorin. Interacts with CEACAM16. In terms of processing, the presence of a hydrophobic C-terminus preceded by a potential cleavage site strongly suggests that tectorins are synthesized as glycosylphosphatidylinositol-linked, membrane-bound precursors. Tectorins are targeted to the apical surface of the inner ear epithelia by the lipid and proteolytically released into the extracellular compartment.

It is found in the cell membrane. The protein resides in the secreted. It localises to the extracellular space. The protein localises to the extracellular matrix. One of the major non-collagenous components of the tectorial membrane. The tectorial membrane is an extracellular matrix of the inner ear that covers the neuroepithelium of the cochlea and contacts the stereocilia bundles of specialized sensory hair cells. Sound induces movement of these hair cells relative to the tectorial membrane, deflects the stereocilia and leads to fluctuations in hair-cell membrane potential, transducing sound into electrical signals. This chain is Alpha-tectorin (TECTA), found in Homo sapiens (Human).